The primary structure comprises 150 residues: Large ribosomal subunit protein bL9 (150 aa).

The protein belongs to the bacterial ribosomal protein bL9 family.

In terms of biological role, binds to the 23S rRNA. This is Large ribosomal subunit protein bL9 from Erwinia tasmaniensis (strain DSM 17950 / CFBP 7177 / CIP 109463 / NCPPB 4357 / Et1/99).